The sequence spans 400 residues: Enoyl-[acyl-carrier-protein] reductase [NADH] (400 aa).

Residues 48–53, 74–75, 111–112, and 139–140 each bind NAD(+); these read GASTGY, FE, DA, and LA. Tyrosine 225 contacts substrate. The Proton donor role is filled by tyrosine 235. NAD(+)-binding positions include lysine 244 and 273–275; that span reads VVT.

It belongs to the TER reductase family. In terms of assembly, monomer.

The enzyme catalyses a 2,3-saturated acyl-[ACP] + NAD(+) = a (2E)-enoyl-[ACP] + NADH + H(+). The protein operates within lipid metabolism; fatty acid biosynthesis. Involved in the final reduction of the elongation cycle of fatty acid synthesis (FAS II). Catalyzes the reduction of a carbon-carbon double bond in an enoyl moiety that is covalently linked to an acyl carrier protein (ACP). This is Enoyl-[acyl-carrier-protein] reductase [NADH] from Burkholderia multivorans (strain ATCC 17616 / 249).